Reading from the N-terminus, the 183-residue chain is Mast cell-expressed membrane protein 1 (183 aa).

The interval 1-26 is disordered; sequence MHASASQDKNRRKPGHDEGAHNPDYE. At 1 to 70 the chain is on the cytoplasmic side; the sequence is MHASASQDKN…PPWLYRTIMM (70 aa). The segment covering 15–24 has biased composition (basic and acidic residues); the sequence is GHDEGAHNPD. The chain crosses the membrane as a helical; Signal-anchor for type II membrane protein span at residues 71–91; it reads LYVLLALVFLSCIVLSALVLV. Over 92–183 the chain is Extracellular; the sequence is KNSEMSKELW…EKKAQPQPST (92 aa). N-linked (GlcNAc...) asparagine glycosylation occurs at Asn-109.

It is found in the membrane. The chain is Mast cell-expressed membrane protein 1 from Mus musculus (Mouse).